A 133-amino-acid chain; its full sequence is Small ribosomal subunit protein bS6 (133 aa).

The protein belongs to the bacterial ribosomal protein bS6 family.

Functionally, binds together with bS18 to 16S ribosomal RNA. This is Small ribosomal subunit protein bS6 from Chlorobium limicola (strain DSM 245 / NBRC 103803 / 6330).